The following is a 205-amino-acid chain: Golgi to ER traffic protein 1 (205 aa).

The Lumenal segment spans residues 1–9 (MFELQPSSI). A helical transmembrane segment spans residues 10–29 (VVLVFCVLAIKVCISLIGKT). Over 30 to 116 (TIQDRIWYLY…QISKLVNLAI (87 aa)) the chain is Cytoplasmic. A coiled-coil region spans residues 53–103 (ALAQKREELVRVNKERRAISAQDEYAKWTKLNRQFDKLNSEVNDLAEATSS). Residues 117–137 (AATTTAPIWFSRIWYRKVVLF) traverse the membrane as a helical segment. Residues 138–161 (YLPPKVFPYYIEWVLALPFIVTGG) are Lumenal-facing. Residues 162 to 178 (VGLTVWMFALNSVLSSL) form a helical membrane-spanning segment. The Cytoplasmic portion of the chain corresponds to 179-205 (EFLIKFYLEEPVKKPEAPAASEAQTKQ).

It belongs to the WRB/GET1 family. In terms of assembly, component of the Golgi to ER traffic (GET) complex, which is composed of GET1, GET2 and GET3. Within the complex, GET1 and GET2 form a heterotetramer which is stabilized by phosphatidylinositol binding and which binds to the GET3 homodimer.

It localises to the endoplasmic reticulum membrane. Its subcellular location is the golgi apparatus membrane. In terms of biological role, required for the post-translational delivery of tail-anchored (TA) proteins to the endoplasmic reticulum. Together with GET2, acts as a membrane receptor for soluble GET3, which recognizes and selectively binds the transmembrane domain of TA proteins in the cytosol. The GET complex cooperates with the HDEL receptor ERD2 to mediate the ATP-dependent retrieval of resident ER proteins that contain a C-terminal H-D-E-L retention signal from the Golgi to the ER. The polypeptide is Golgi to ER traffic protein 1 (Clavispora lusitaniae (strain ATCC 42720) (Yeast)).